Consider the following 465-residue polypeptide: Iron-sulfur cluster assembly SufBD family protein SSP1857 (465 aa).

The protein belongs to the iron-sulfur cluster assembly SufBD family.

The sequence is that of Iron-sulfur cluster assembly SufBD family protein SSP1857 from Staphylococcus saprophyticus subsp. saprophyticus (strain ATCC 15305 / DSM 20229 / NCIMB 8711 / NCTC 7292 / S-41).